Reading from the N-terminus, the 326-residue chain is DNA repair protein XRCC4 (326 aa).

The interaction with IFFO1 stretch occupies residues 1 to 212 (MERKVSRIYL…QLEESTKPER (212 aa)). The residue at position 53 (serine 53) is a Phosphoserine; by PRKDC. Coiled coils occupy residues 131 to 165 (LDTI…FEKC) and 185 to 209 (NEKK…ESTK). The interaction with LIG4 stretch occupies residues 180–211 (FILVLNEKKTKIRSLHKLLNEVQQLEESTKPE). Serine 193 is subject to Phosphoserine; by PRKDC. The disordered stretch occupies residues 203–326 (QLEESTKPER…RNSSPEDLFD (124 aa)). Residues 206–226 (ESTKPERENPCSDKTPEEHGL) show a composition bias toward basic and acidic residues. Phosphotyrosine is present on tyrosine 227. Residue serine 230 is modified to Phosphoserine. Threonine 231 carries the phosphothreonine modification. Position 235 is a phosphoserine (serine 235). Threonine 244 carries the post-translational modification Phosphothreonine. Residue serine 250 is modified to Phosphoserine. Phosphoserine; by PRKDC is present on serine 254. The Nuclear localization signal signature appears at 264–269 (RKRRHR). Residue lysine 290 forms a Glycyl lysine isopeptide (Lys-Gly) (interchain with G-Cter in ubiquitin) linkage. Serine 295 bears the Phosphoserine; by PRKDC mark. A Phosphoserine modification is found at serine 296. Residues serine 307 and serine 312 each carry the phosphoserine; by PRKDC modification. Positions 307–326 (SAENMSLETLRNSSPEDLFD) are enriched in polar residues. Threonine 315 is subject to Phosphothreonine; by PRKDC. 2 positions are modified to phosphoserine; by PRKDC: serine 319 and serine 320.

It belongs to the XRCC4-XLF family. XRCC4 subfamily. In terms of assembly, homodimer and homotetramer in solution. Interacts with NHEJ1/XLF; the interaction is direct and is mediated via a head-to-head interaction between N-terminal head regions. Interacts with LIG4; the LIG4-XRCC4 subcomplex has a 1:2 stoichiometry and XRCC4 is required for LIG4 stability. Component of the core long-range non-homologous end joining (NHEJ) complex (also named DNA-PK complex) composed of PRKDC, LIG4, XRCC4, XRCC6/Ku70, XRCC5/Ku86 and NHEJ1/XLF. Additional component of the NHEJ complex includes PAXX. Following autophosphorylation, PRKDC dissociates from DNA, leading to formation of the short-range NHEJ complex, composed of LIG4, XRCC4, XRCC6/Ku70, XRCC5/Ku86 and NHEJ1/XLF. Interacts with PRKDC; the interaction is direct. Interacts with XRCC6/Ku70; the interaction is direct. Interacts with APTX and APLF. Forms a heterotetramer with IFFO1; the interaction involves LIG4-free XRCC4 and leads to the relocalization of IFFO1 to the sites of DNA damage. Interacts with PNKP; mainly interacts with PNKP when phosphorylated at Thr-231, but is also able to interact at much lower level with PNKP when not unphosphorylated. Interacts with POLL (DNA polymerase lambda). As to quaternary structure, interacts with XKR4; interacts with the processed form of XKR4, which is cleaved by caspase. In terms of processing, phosphorylated by PRKDC at the C-terminus in response to DNA damage; Ser-254 and Ser-312 constitute the main phosphorylation sites. Phosphorylation by PRKDC at the C-terminus of XRCC4 and NHEJ1/XLF are highly redundant and regulate ability of the XRCC4-NHEJ1/XLF subcomplex to bridge DNA. Phosphorylation by PRKDC does not prevent interaction with NHEJ1/XLF but disrupts ability to bridge DNA and promotes detachment from DNA. Phosphorylation at Ser-319 and Ser-320 by PRKDC promotes recognition by the SCF(FBXW7) complex and subsequent ubiquitination via 'Lys-63'-linked ubiquitin. Phosphorylation at Thr-231 by CK2 promotes interaction with PNKP; regulating PNKP activity and localization to DNA damage sites. Phosphorylation by CK2 promotes interaction with APTX. Ubiquitinated at Lys-290 by the SCF(FBXW7) complex via 'Lys-63'-linked ubiquitination, thereby promoting double-strand break repair: the SCF(FBXW7) complex specifically recognizes XRCC4 when phosphorylated at Ser-319 and Ser-320 by PRKDC, and 'Lys-63'-linked ubiquitination facilitates DNA non-homologous end joining (NHEJ) by enhancing association with XRCC5/Ku80 and XRCC6/Ku70. Monoubiquitinated. Post-translationally, undergoes proteolytic processing by caspase-3 (CASP3). This generates the protein XRCC4, C-terminus (XRCC4/C), which translocates to the cytoplasm and activates phospholipid scramblase activity of XKR4, thereby promoting phosphatidylserine exposure on apoptotic cell surface.

Its subcellular location is the nucleus. It is found in the chromosome. It localises to the cytoplasm. DNA non-homologous end joining (NHEJ) core factor, required for double-strand break repair and V(D)J recombination. Acts as a scaffold protein that regulates recruitment of other proteins to DNA double-strand breaks (DSBs). Associates with NHEJ1/XLF to form alternating helical filaments that bridge DNA and act like a bandage, holding together the broken DNA until it is repaired. The XRCC4-NHEJ1/XLF subcomplex binds to the DNA fragments of a DSB in a highly diffusive manner and robustly bridges two independent DNA molecules, holding the broken DNA fragments in close proximity to one other. The mobility of the bridges ensures that the ends remain accessible for further processing by other repair factors. Plays a key role in the NHEJ ligation step of the broken DNA during DSB repair via direct interaction with DNA ligase IV (LIG4): the LIG4-XRCC4 subcomplex reseals the DNA breaks after the gap filling is completed. XRCC4 stabilizes LIG4, regulates its subcellular localization and enhances LIG4's joining activity. Binding of the LIG4-XRCC4 subcomplex to DNA ends is dependent on the assembly of the DNA-dependent protein kinase complex DNA-PK to these DNA ends. Promotes displacement of PNKP from processed strand break termini. Its function is as follows. Acts as an activator of the phospholipid scramblase activity of XKR4. This form, which is generated upon caspase-3 (CASP3) cleavage, translocates into the cytoplasm and interacts with XKR4, thereby promoting phosphatidylserine scramblase activity of XKR4 and leading to phosphatidylserine exposure on apoptotic cell surface. In Mus musculus (Mouse), this protein is DNA repair protein XRCC4.